Here is a 470-residue protein sequence, read N- to C-terminus: Arginine ADP-riboxanase OspC1 (470 aa).

Residues His138, Gln139, Ser140, Leu144, Ile157, Asn167, Phe183, His201, Phe206, Asp226, and Glu320 each coordinate NAD(+). Residue Glu320 is part of the active site. 3 ANK repeats span residues Ile363–Gln392, His399–Thr431, and Ser438–Asn467.

The protein belongs to the OspC family. Interacts with host calmodulin (CALM1, CALM2 and/or CALM3); specifically interacts with the apo form of calmodulin, preventing calcium-binding.

The protein resides in the secreted. It localises to the host nucleus. The enzyme catalyses L-arginyl-[protein] + NAD(+) = ADP-riboxanated L-argininyl-[protein] + nicotinamide + NH4(+) + H(+). In terms of biological role, ADP-riboxanase effector that mediates arginine ADP-riboxanation of host caspases. ADP-riboxanation of host apoptotic caspases (CASP3, CASP8 and CASP9) prevents their activation, thereby inhibiting host cell extrinsic and intrinsic apoptosis. Does not catalyze ADP-riboxanation of host CASP4/CASP11. Independently of its ADP-riboxanase activity, acts as an inhibitor of calcium signaling by inhibiting host calmodulin, preventing activation of the JAK-STAT signaling pathway in response to interferon-beta. Mechanistically, acts by binding to the apo form of calmodulin, preventing calcium-binding and ability to activate host CaMK2 (CAMKII), which is required to stimulate the JAK-STAT signaling pathway in response to interferon-beta. This chain is Arginine ADP-riboxanase OspC1, found in Shigella flexneri.